The primary structure comprises 401 residues: Chalcone synthase 3 (401 aa).

Cys168 is an active-site residue.

Belongs to the thiolase-like superfamily. Chalcone/stilbene synthases family.

The enzyme catalyses (E)-4-coumaroyl-CoA + 3 malonyl-CoA + 3 H(+) = 2',4,4',6'-tetrahydroxychalcone + 3 CO2 + 4 CoA. It participates in secondary metabolite biosynthesis; flavonoid biosynthesis. Functionally, the primary product of this enzyme is 4,2',4',6'-tetrahydroxychalcone (also termed naringenin-chalcone or chalcone) which can under specific conditions spontaneously isomerize into naringenin. The protein is Chalcone synthase 3 (CHS3) of Sorghum bicolor (Sorghum).